The following is a 246-amino-acid chain: uncharacterized protein (246 aa).

This is an uncharacterized protein from Campylobacter jejuni subsp. jejuni serotype O:2 (strain ATCC 700819 / NCTC 11168).